The following is a 190-amino-acid chain: Potassium-transporting ATPase KdpC subunit (190 aa).

A helical membrane pass occupies residues 10-30; it reads TFIFLLLITGGVYPLLTTVLG.

This sequence belongs to the KdpC family. The system is composed of three essential subunits: KdpA, KdpB and KdpC.

It localises to the cell inner membrane. Functionally, part of the high-affinity ATP-driven potassium transport (or Kdp) system, which catalyzes the hydrolysis of ATP coupled with the electrogenic transport of potassium into the cytoplasm. This subunit acts as a catalytic chaperone that increases the ATP-binding affinity of the ATP-hydrolyzing subunit KdpB by the formation of a transient KdpB/KdpC/ATP ternary complex. This Escherichia coli O139:H28 (strain E24377A / ETEC) protein is Potassium-transporting ATPase KdpC subunit.